The primary structure comprises 334 residues: Probable type II restriction enzyme HindVP (334 aa).

It carries out the reaction Endonucleolytic cleavage of DNA to give specific double-stranded fragments with terminal 5'-phosphates.. A P subtype restriction enzyme that recognizes the double-stranded sequence 5'-GRCGYC-3'; the cleavage site is unknown. The chain is Probable type II restriction enzyme HindVP (hindVRP) from Haemophilus influenzae (strain ATCC 51907 / DSM 11121 / KW20 / Rd).